The following is a 397-amino-acid chain: Succinate--CoA ligase [ADP-forming] subunit beta (397 aa).

Residues 9–253 (KEILASYGVR…IREENPIEVE (245 aa)) enclose the ATP-grasp domain. ATP-binding positions include K50, 57–59 (GRG), V106, and E116. N208 and D222 together coordinate Mg(2+). Substrate is bound by residues N273 and 330 to 332 (GIV).

Belongs to the succinate/malate CoA ligase beta subunit family. Heterotetramer of two alpha and two beta subunits. Requires Mg(2+) as cofactor.

It carries out the reaction succinate + ATP + CoA = succinyl-CoA + ADP + phosphate. The catalysed reaction is GTP + succinate + CoA = succinyl-CoA + GDP + phosphate. It functions in the pathway carbohydrate metabolism; tricarboxylic acid cycle; succinate from succinyl-CoA (ligase route): step 1/1. Its function is as follows. Succinyl-CoA synthetase functions in the citric acid cycle (TCA), coupling the hydrolysis of succinyl-CoA to the synthesis of either ATP or GTP and thus represents the only step of substrate-level phosphorylation in the TCA. The beta subunit provides nucleotide specificity of the enzyme and binds the substrate succinate, while the binding sites for coenzyme A and phosphate are found in the alpha subunit. The chain is Succinate--CoA ligase [ADP-forming] subunit beta from Flavobacterium johnsoniae (strain ATCC 17061 / DSM 2064 / JCM 8514 / BCRC 14874 / CCUG 350202 / NBRC 14942 / NCIMB 11054 / UW101) (Cytophaga johnsonae).